A 65-amino-acid polypeptide reads, in one-letter code: Small ribosomal subunit protein eS17 (65 aa).

This sequence belongs to the eukaryotic ribosomal protein eS17 family.

This is Small ribosomal subunit protein eS17 from Archaeoglobus fulgidus (strain ATCC 49558 / DSM 4304 / JCM 9628 / NBRC 100126 / VC-16).